The chain runs to 284 residues: uncharacterized protein (284 aa).

A helical membrane pass occupies residues 12 to 32; that stretch reads ILFILFVVAFCVYLVPRVAIN.

It belongs to the serine esterase family.

It is found in the membrane. This is an uncharacterized protein from Escherichia coli (strain K12).